Here is a 207-residue protein sequence, read N- to C-terminus: Outer-membrane lipoprotein carrier protein (207 aa).

The N-terminal stretch at M1–A21 is a signal peptide.

The protein belongs to the LolA family. Monomer.

It localises to the periplasm. Functionally, participates in the translocation of lipoproteins from the inner membrane to the outer membrane. Only forms a complex with a lipoprotein if the residue after the N-terminal Cys is not an aspartate (The Asp acts as a targeting signal to indicate that the lipoprotein should stay in the inner membrane). This chain is Outer-membrane lipoprotein carrier protein, found in Pseudomonas entomophila (strain L48).